Here is a 458-residue protein sequence, read N- to C-terminus: Tol-Pal system protein TolB (458 aa).

Positions 1-23 (MSSVIRKWALTALMAVSSTALFA) are cleaved as a signal peptide.

Belongs to the TolB family. In terms of assembly, the Tol-Pal system is composed of five core proteins: the inner membrane proteins TolA, TolQ and TolR, the periplasmic protein TolB and the outer membrane protein Pal. They form a network linking the inner and outer membranes and the peptidoglycan layer.

It is found in the periplasm. Functionally, part of the Tol-Pal system, which plays a role in outer membrane invagination during cell division and is important for maintaining outer membrane integrity. This Zymomonas mobilis subsp. mobilis (strain ATCC 31821 / ZM4 / CP4) protein is Tol-Pal system protein TolB.